A 553-amino-acid chain; its full sequence is Hydroxylamine reductase (553 aa).

Residues Cys-3, Cys-6, Cys-18, and Cys-25 each contribute to the [2Fe-2S] cluster site. His-252, Glu-276, Cys-320, Cys-408, Cys-436, Cys-461, Glu-495, and Lys-497 together coordinate hybrid [4Fe-2O-2S] cluster. Cys-408 carries the post-translational modification Cysteine persulfide.

This sequence belongs to the HCP family. Requires [2Fe-2S] cluster as cofactor. Hybrid [4Fe-2O-2S] cluster is required as a cofactor.

It is found in the cytoplasm. It catalyses the reaction A + NH4(+) + H2O = hydroxylamine + AH2 + H(+). In terms of biological role, catalyzes the reduction of hydroxylamine to form NH(3) and H(2)O. This Photobacterium phosphoreum protein is Hydroxylamine reductase.